Here is a 256-residue protein sequence, read N- to C-terminus: 1-(5-phosphoribosyl)-5-[(5-phosphoribosylamino)methylideneamino] imidazole-4-carboxamide isomerase (256 aa).

Asp9 serves as the catalytic Proton acceptor. The active-site Proton donor is the Asp130.

The protein belongs to the HisA/HisF family.

Its subcellular location is the cytoplasm. It catalyses the reaction 1-(5-phospho-beta-D-ribosyl)-5-[(5-phospho-beta-D-ribosylamino)methylideneamino]imidazole-4-carboxamide = 5-[(5-phospho-1-deoxy-D-ribulos-1-ylimino)methylamino]-1-(5-phospho-beta-D-ribosyl)imidazole-4-carboxamide. The protein operates within amino-acid biosynthesis; L-histidine biosynthesis; L-histidine from 5-phospho-alpha-D-ribose 1-diphosphate: step 4/9. This chain is 1-(5-phosphoribosyl)-5-[(5-phosphoribosylamino)methylideneamino] imidazole-4-carboxamide isomerase, found in Prochlorococcus marinus (strain SARG / CCMP1375 / SS120).